The primary structure comprises 122 residues: Large ribosomal subunit protein uL14 (122 aa).

The protein belongs to the universal ribosomal protein uL14 family. In terms of assembly, part of the 50S ribosomal subunit. Forms a cluster with proteins L3 and L19. In the 70S ribosome, L14 and L19 interact and together make contacts with the 16S rRNA in bridges B5 and B8.

Functionally, binds to 23S rRNA. Forms part of two intersubunit bridges in the 70S ribosome. The polypeptide is Large ribosomal subunit protein uL14 (Stenotrophomonas maltophilia (strain R551-3)).